Reading from the N-terminus, the 60-residue chain is UPF0509 protein ESA_01586 (60 aa).

Belongs to the UPF0509 family.

The polypeptide is UPF0509 protein ESA_01586 (Cronobacter sakazakii (strain ATCC BAA-894) (Enterobacter sakazakii)).